Consider the following 308-residue polypeptide: Elongation factor Ts (308 aa).

An involved in Mg(2+) ion dislocation from EF-Tu region spans residues 80 to 83 (TDFV).

Belongs to the EF-Ts family.

Its subcellular location is the cytoplasm. Its function is as follows. Associates with the EF-Tu.GDP complex and induces the exchange of GDP to GTP. It remains bound to the aminoacyl-tRNA.EF-Tu.GTP complex up to the GTP hydrolysis stage on the ribosome. This chain is Elongation factor Ts, found in Rhizobium leguminosarum bv. trifolii (strain WSM2304).